The following is a 901-amino-acid chain: Dipeptidyl-aminopeptidase B (901 aa).

Residues 1–22 show a composition bias toward low complexity; sequence MSSPRPSTSSTSSDSGLSVDTT. The disordered stretch occupies residues 1–67; the sequence is MSSPRPSTSS…EPFLPSAKKQ (67 aa). The Cytoplasmic portion of the chain corresponds to 1 to 76; that stretch reads MSSPRPSTSS…QAASGSRTSR (76 aa). A helical; Signal-anchor for type II membrane protein transmembrane segment spans residues 77–97; it reads LIWGLVILCVAGWLWGLVLFV. At 98–901 the chain is on the vacuolar side; the sequence is TQNRSAQQSV…VKRSLPMLVN (804 aa). N-linked (GlcNAc...) asparagine glycans are attached at residues asparagine 334 and asparagine 625. Serine 739 acts as the Charge relay system in catalysis. An N-linked (GlcNAc...) asparagine glycan is attached at asparagine 793. Catalysis depends on charge relay system residues aspartate 816 and histidine 849.

Belongs to the peptidase S9B family.

Its subcellular location is the vacuole membrane. The enzyme catalyses Release of an N-terminal dipeptide, Xaa-Yaa-|-Zaa-, from a polypeptide, preferentially when Yaa is Pro, provided Zaa is neither Pro nor hydroxyproline.. Type IV dipeptidyl-peptidase which removes N-terminal dipeptides sequentially from polypeptides having unsubstituted N-termini provided that the penultimate residue is proline. This is Dipeptidyl-aminopeptidase B (dapB) from Aspergillus niger.